The chain runs to 388 residues: Chorismate synthase (388 aa).

2 residues coordinate NADP(+): Arg-39 and Arg-45. Residues 130-132 (RSS), 251-252 (NA), Gly-296, 311-315 (KPIPT), and Arg-337 contribute to the FMN site.

It belongs to the chorismate synthase family. As to quaternary structure, homotetramer. FMNH2 serves as cofactor.

The enzyme catalyses 5-O-(1-carboxyvinyl)-3-phosphoshikimate = chorismate + phosphate. It participates in metabolic intermediate biosynthesis; chorismate biosynthesis; chorismate from D-erythrose 4-phosphate and phosphoenolpyruvate: step 7/7. Its function is as follows. Catalyzes the anti-1,4-elimination of the C-3 phosphate and the C-6 proR hydrogen from 5-enolpyruvylshikimate-3-phosphate (EPSP) to yield chorismate, which is the branch point compound that serves as the starting substrate for the three terminal pathways of aromatic amino acid biosynthesis. This reaction introduces a second double bond into the aromatic ring system. In Streptococcus pyogenes serotype M12 (strain MGAS2096), this protein is Chorismate synthase.